The following is a 313-amino-acid chain: Biotin synthase (313 aa).

The 231-residue stretch at asparagine 28 to serine 258 folds into the Radical SAM core domain. The [4Fe-4S] cluster site is built by cysteine 46, cysteine 50, and cysteine 53. Residues cysteine 90, cysteine 121, cysteine 181, and arginine 256 each contribute to the [2Fe-2S] cluster site.

It belongs to the radical SAM superfamily. Biotin synthase family. In terms of assembly, homodimer. It depends on [4Fe-4S] cluster as a cofactor. [2Fe-2S] cluster is required as a cofactor.

It carries out the reaction (4R,5S)-dethiobiotin + (sulfur carrier)-SH + 2 reduced [2Fe-2S]-[ferredoxin] + 2 S-adenosyl-L-methionine = (sulfur carrier)-H + biotin + 2 5'-deoxyadenosine + 2 L-methionine + 2 oxidized [2Fe-2S]-[ferredoxin]. It functions in the pathway cofactor biosynthesis; biotin biosynthesis; biotin from 7,8-diaminononanoate: step 2/2. In terms of biological role, catalyzes the conversion of dethiobiotin (DTB) to biotin by the insertion of a sulfur atom into dethiobiotin via a radical-based mechanism. The sequence is that of Biotin synthase from Francisella tularensis subsp. mediasiatica (strain FSC147).